The following is a 494-amino-acid chain: GTPase Der (494 aa).

2 EngA-type G domains span residues 3–166 (PVVA…AEQM) and 206–379 (IKLA…RSAT). GTP contacts are provided by residues 9-16 (GRPNVGKS), 56-60 (DTGGI), 118-121 (NKVD), 212-219 (GRPNVGKS), 259-263 (DTAGV), and 324-327 (NKWD). The 85-residue stretch at 380–464 (TRVGTSVLTR…PIRIQFQNSE (85 aa)) folds into the KH-like domain.

Belongs to the TRAFAC class TrmE-Era-EngA-EngB-Septin-like GTPase superfamily. EngA (Der) GTPase family. As to quaternary structure, associates with the 50S ribosomal subunit.

Its function is as follows. GTPase that plays an essential role in the late steps of ribosome biogenesis. The chain is GTPase Der from Vibrio cholerae serotype O1 (strain ATCC 39541 / Classical Ogawa 395 / O395).